We begin with the raw amino-acid sequence, 389 residues long: (S)-8-oxocitronellyl enol synthase CYC1 (389 aa).

NADP(+)-binding positions include 34-36, 62-63, 80-81, 104-105, and Q138; these read TGI, RR, DV, and AW. Active-site residues include K142 and Y174. Substrate contacts are provided by K142 and Y174. NADP(+) is bound by residues Y174, V201, and 208-210; that span reads SMM. A substrate-binding site is contributed by S350.

This sequence belongs to the short-chain dehydrogenases/reductases (SDR) family. Highly divergent.

The catalysed reaction is (S)-8-oxocitronellyl enol + NADP(+) = (6E)-8-oxogeranial + NADPH + H(+). It catalyses the reaction (S)-8-oxocitronellyl enol + NAD(+) = (6E)-8-oxogeranial + NADH + H(+). In terms of biological role, iridoid synthase that catalyzes the first step in generation of the iridoid ring scaffold using the linear monoterpene (6E)-8-oxogeranial as substrate. Iridoids comprise a large family of distinctive bicyclic monoterpenes that possess a wide range of pharmacological activities, including anticancer, anti-inflammatory, antifungal and antibacterial activities. This Camptotheca acuminata (Happy tree) protein is (S)-8-oxocitronellyl enol synthase CYC1.